Consider the following 1120-residue polypeptide: ISWI chromatin-remodeling complex ATPase ISW2 (1120 aa).

Basic and acidic residues predominate over residues 1-16 (MTTQQEEQRSDTKNSK). Disordered stretches follow at residues 1-58 (MTTQ…VEDR) and 129-153 (LSKS…EDAE). A phosphoserine mark is found at serine 17 and serine 19. Positions 47-58 (LSDKEIYTVEDR) are enriched in basic and acidic residues. Positions 196–361 (ISLHENKLSG…WALLNFLLPD (166 aa)) constitute a Helicase ATP-binding domain. 209–216 (DEMGLGKT) lines the ATP pocket. The DEAH box motif lies at 312-315 (DEAH). In terms of domain architecture, Helicase C-terminal spans 494–645 (ILDKLLKRLK…QLVIQQGTGK (152 aa)). Disordered regions lie at residues 764–783 (GGGS…PRAP) and 828–853 (NEGS…KGHE). Residue serine 831 is modified to Phosphoserine. One can recognise an SANT domain in the interval 886–938 (KAFTNWNKRDFMAFINACAKYGRDDMENIKKSIDSKTPEEVEVYAKIFWERLK). The segment at 1062 to 1120 (PDANKKKRSRTSATREDTPLSQNESTRASTVPNLPTTMVTNQKDTNDHVDKRTKIDQEA) is disordered. Threonine 1079 carries the phosphothreonine modification. Polar residues predominate over residues 1080 to 1104 (PLSQNESTRASTVPNLPTTMVTNQK). Serine 1082 carries the phosphoserine modification. Over residues 1105 to 1120 (DTNDHVDKRTKIDQEA) the composition is skewed to basic and acidic residues.

The protein belongs to the SNF2/RAD54 helicase family. ISWI subfamily. Component of the ISW2 complex, which at least consists of ISW2, ITC1, DLS1 and DPB4. May form a stable subcomplex with ITC1.

It is found in the nucleus. Functionally, catalytic component of the ISW2 complex, which acts in remodeling the chromatin by catalyzing an ATP-dependent alteration in the structure of nucleosomal DNA. The ISW2 complex is involved in coordinating transcriptional repression and in inheritance of telomeric silencing. It is involved in repression of MAT a-specific genes, INO1, and early meiotic genes during mitotic growth dependent upon transcription factor UME6 and in a parallel pathway to the RPD3-SIN3 histone deacetylase complex. This Saccharomyces cerevisiae (strain ATCC 204508 / S288c) (Baker's yeast) protein is ISWI chromatin-remodeling complex ATPase ISW2 (ISW2).